Consider the following 843-residue polypeptide: Translation initiation factor IF-2 (843 aa).

Disordered stretches follow at residues 55-185 (AEAV…EDRD) and 209-228 (KVEE…QVKV). A compositionally biased stretch (basic and acidic residues) spans 62 to 106 (PQEKPKKSAPKKEEKPKEEVKKEAEEKVAASKKEEEKPQEKKSVE). The segment covering 114–128 (LKKRRGLVIVKKKRP) has biased composition (basic residues). Residues 129–141 (KVEPKVEEKEAKQ) show a composition bias toward basic and acidic residues. Residues 156-165 (LKRKPKKAKK) are compositionally biased toward basic residues. Composition is skewed to basic and acidic residues over residues 171-185 (KKNE…EDRD) and 209-221 (KVEE…EPQK). The 170-residue stretch at 342 to 511 (ERPPVITIMG…LLQAEIMELK (170 aa)) folds into the tr-type G domain. Residues 351–358 (GHVDHGKT) form a G1 region. A GTP-binding site is contributed by 351–358 (GHVDHGKT). A G2 region spans residues 376-380 (GITQH). Residues 397–400 (DTPG) form a G3 region. GTP is bound by residues 397 to 401 (DTPGH) and 451 to 454 (NKID). Residues 451 to 454 (NKID) are G4. A G5 region spans residues 487–489 (SAK).

This sequence belongs to the TRAFAC class translation factor GTPase superfamily. Classic translation factor GTPase family. IF-2 subfamily.

It is found in the cytoplasm. One of the essential components for the initiation of protein synthesis. Protects formylmethionyl-tRNA from spontaneous hydrolysis and promotes its binding to the 30S ribosomal subunits. Also involved in the hydrolysis of GTP during the formation of the 70S ribosomal complex. This chain is Translation initiation factor IF-2, found in Nitratiruptor sp. (strain SB155-2).